Here is a 427-residue protein sequence, read N- to C-terminus: Neuronal pentraxin-2 (427 aa).

A signal peptide spans 1–17; that stretch reads MLALLAAGVAFAVVVLA. N144 and N185 each carry an N-linked (GlcNAc...) asparagine glycan. The Pentraxin (PTX) domain maps to 219–420; it reads DAFKVSLPFR…GASKWPVETC (202 aa). C249 and C309 are disulfide-bonded. 5 residues coordinate Ca(2+): N273, E351, Q352, D353, and Q363. The N-linked (GlcNAc...) asparagine glycan is linked to N389.

In terms of assembly, homooligomer or heterooligomer (probably pentamer) with neuronal pentraxin receptor (NPTXR). The cofactor is Ca(2+). In terms of tissue distribution, testis specific.

It is found in the cytoplasmic vesicle. The protein resides in the secretory vesicle. Its subcellular location is the acrosome lumen. In terms of biological role, may be involved in binding, concentrating, and sorting soluble glycoproteins or glycolipids that are destined for the acrosome. This Cavia porcellus (Guinea pig) protein is Neuronal pentraxin-2 (NPTX2).